Here is a 276-residue protein sequence, read N- to C-terminus: Proteasome subunit beta type-8 (276 aa).

Positions 1 to 72 are cleaved as a propeptide — removed in mature form; the sequence is MALLEVCGAP…KNIRKEMVHG (72 aa). T73 functions as the Nucleophile in the catalytic mechanism.

This sequence belongs to the peptidase T1B family. As to quaternary structure, the 26S proteasome consists of a 20S proteasome core and two 19S regulatory subunits. The 20S proteasome core is composed of 28 subunits that are arranged in four stacked rings, resulting in a barrel-shaped structure. The two end rings are each formed by seven alpha subunits, and the two central rings are each formed by seven beta subunits. The catalytic chamber with the active sites is on the inside of the barrel. Component of the immunoproteasome, where it displaces the equivalent housekeeping subunit PSMB5. Component of the spermatoproteasome, a form of the proteasome specifically found in testis. Directly interacts with POMP. Autocleaved. The resulting N-terminal Thr residue of the mature subunit is responsible for the nucleophile proteolytic activity.

Its subcellular location is the cytoplasm. The protein localises to the nucleus. It carries out the reaction Cleavage of peptide bonds with very broad specificity.. Functionally, the proteasome is a multicatalytic proteinase complex which is characterized by its ability to cleave peptides with Arg, Phe, Tyr, Leu, and Glu adjacent to the leaving group at neutral or slightly basic pH. The proteasome has an ATP-dependent proteolytic activity. This subunit is involved in antigen processing to generate class I binding peptides. May participate in the generation of spliced peptides resulting from the ligation of two separate proteasomal cleavage products that are not contiguous in the parental protein. Required for adipocyte differentiation. This Canis lupus familiaris (Dog) protein is Proteasome subunit beta type-8 (PSMB8).